The following is a 178-amino-acid chain: Small ribosomal subunit protein uS5 (178 aa).

One can recognise an S5 DRBM domain in the interval 15–78; that stretch reads FEEKIIEIRR…ADAKKNVIEV (64 aa).

The protein belongs to the universal ribosomal protein uS5 family. In terms of assembly, part of the 30S ribosomal subunit. Contacts proteins S4 and S8.

With S4 and S12 plays an important role in translational accuracy. Functionally, located at the back of the 30S subunit body where it stabilizes the conformation of the head with respect to the body. The chain is Small ribosomal subunit protein uS5 from Thermotoga neapolitana (strain ATCC 49049 / DSM 4359 / NBRC 107923 / NS-E).